Reading from the N-terminus, the 123-residue chain is Small ribosomal subunit protein uS13 (123 aa).

The disordered stretch occupies residues 89–123 (GRRHRSGLPVRGQRTRTNARTRKGKRKAVAKKKAK). Residues 101–123 (QRTRTNARTRKGKRKAVAKKKAK) are compositionally biased toward basic residues.

It belongs to the universal ribosomal protein uS13 family. As to quaternary structure, part of the 30S ribosomal subunit. Forms a loose heterodimer with protein S19. Forms two bridges to the 50S subunit in the 70S ribosome.

In terms of biological role, located at the top of the head of the 30S subunit, it contacts several helices of the 16S rRNA. In the 70S ribosome it contacts the 23S rRNA (bridge B1a) and protein L5 of the 50S subunit (bridge B1b), connecting the 2 subunits; these bridges are implicated in subunit movement. Contacts the tRNAs in the A and P-sites. This Cutibacterium acnes (strain DSM 16379 / KPA171202) (Propionibacterium acnes) protein is Small ribosomal subunit protein uS13.